Here is a 473-residue protein sequence, read N- to C-terminus: Ribulose bisphosphate carboxylase large chain (473 aa).

2 residues coordinate substrate: asparagine 116 and threonine 166. Catalysis depends on lysine 168, which acts as the Proton acceptor. Lysine 170 contributes to the substrate binding site. Residues lysine 194, aspartate 196, and glutamate 197 each coordinate Mg(2+). Lysine 194 is subject to N6-carboxylysine. Histidine 287 functions as the Proton acceptor in the catalytic mechanism. Residues arginine 288, histidine 320, and serine 372 each contribute to the substrate site.

This sequence belongs to the RuBisCO large chain family. Type I subfamily. As to quaternary structure, heterohexadecamer of 8 large chains and 8 small chains. Requires Mg(2+) as cofactor.

The enzyme catalyses 2 (2R)-3-phosphoglycerate + 2 H(+) = D-ribulose 1,5-bisphosphate + CO2 + H2O. It catalyses the reaction D-ribulose 1,5-bisphosphate + O2 = 2-phosphoglycolate + (2R)-3-phosphoglycerate + 2 H(+). Its function is as follows. RuBisCO catalyzes two reactions: the carboxylation of D-ribulose 1,5-bisphosphate, the primary event in carbon dioxide fixation, as well as the oxidative fragmentation of the pentose substrate. Both reactions occur simultaneously and in competition at the same active site. In Halorhodospira halophila (strain DSM 244 / SL1) (Ectothiorhodospira halophila (strain DSM 244 / SL1)), this protein is Ribulose bisphosphate carboxylase large chain.